Reading from the N-terminus, the 94-residue chain is Protein RnfH (94 aa).

This sequence belongs to the UPF0125 (RnfH) family.

This chain is Protein RnfH, found in Serratia proteamaculans (strain 568).